Here is a 407-residue protein sequence, read N- to C-terminus: Peptidase T (407 aa).

Residue H82 coordinates Zn(2+). The active site involves D84. Residue D143 participates in Zn(2+) binding. E177 functions as the Proton acceptor in the catalytic mechanism. Residues E178, D200, and H382 each contribute to the Zn(2+) site.

It belongs to the peptidase M20B family. Zn(2+) serves as cofactor.

It is found in the cytoplasm. The catalysed reaction is Release of the N-terminal residue from a tripeptide.. Its function is as follows. Cleaves the N-terminal amino acid of tripeptides. The sequence is that of Peptidase T from Streptococcus pyogenes serotype M6 (strain ATCC BAA-946 / MGAS10394).